A 328-amino-acid chain; its full sequence is Arylacetonitrilase (328 aa).

Positions 5 to 278 (VRVAVTQAEP…EGIIYADLDL (274 aa)) constitute a CN hydrolase domain. Glu-45 serves as the catalytic Proton acceptor. Lys-125 is a catalytic residue. Catalysis depends on Cys-160, which acts as the Nucleophile.

The protein belongs to the carbon-nitrogen hydrolase superfamily. Nitrilase family.

The enzyme catalyses a nitrile + 2 H2O = a carboxylate + NH4(+). It catalyses the reaction 4-chlorophenylacetonitrile + 2 H2O = 4-chlorophenylacetate + NH4(+). In terms of biological role, nitrilase that hydrolyzes preferentially phenylacetonitrile and (R,S)-mandelonitrile. Also acts on dinitriles like phenylenediacetonitriles (PDAs) 1,2-PDA, 1,3-PDA, and 1,4-PDA, and cyanophenyl acetonitriles (CPAs) 2-CPA and 4-CPA. The chain is Arylacetonitrilase (nit2) from Aspergillus kawachii (strain NBRC 4308) (White koji mold).